The primary structure comprises 61 residues: MFTLKKSLLLLFFLATINLSFCEQERNAEEERRDEPDERNAEVEKRFFPIVGKLLFGLLGK.

Positions 1–22 are cleaved as a signal peptide; that stretch reads MFTLKKSLLLLFFLATINLSFC. The propeptide occupies 23–46; that stretch reads EQERNAEEERRDEPDERNAEVEKR. At Leu59 the chain carries Leucine amide.

It belongs to the frog skin active peptide (FSAP) family. Temporin subfamily. In terms of tissue distribution, expressed by the skin glands.

The protein localises to the secreted. In terms of biological role, antimicrobial peptide with activity against Gram-positive and Gram-negative bacteria and against fungi. Has been tested against S.aureus (MIC=7.5 ug/mL), B.pumilus (MIC=15.0 ug/mL), B.cereus (MIC=75.0 ug/mL), E.coli (MIC=15.0 ug/mL), B.dysenteriae (MIC=30.0 ug/mL), A.cacoaceticus (MIC=60.0 ug/mL), P.aeruginosa (MIC=7.5 ug/mL) and C.albicans (MIC=5.0 ug/mL). Also shows a weak hemolytic activity. In Amolops loloensis (Lolokou Sucker Frog), this protein is Temporin-ALj.